We begin with the raw amino-acid sequence, 684 residues long: Transcriptional regulatory protein RCO1 (684 aa).

At M1 the chain carries N-acetylmethionine. The tract at residues 1–48 is disordered; sequence MDTSKKDTTRSPSHSNSSSPSSSSLSSSSSKEKKRPKRLSSQNVNYDL. Over residues 10–29 the composition is skewed to low complexity; sequence RSPSHSNSSSPSSSSLSSSS. At S68 the chain carries Phosphoserine. Residues 260–309 form a PHD-type 1 zinc finger; sequence EDFCSACNQSGSFLCCDTCPKSFHFLCLDPPIDPNNLPKGDWHCNECKFK. The segment at 414–472 adopts a PHD-type 2; atypical zinc-finger fold; it reads FLICYKCNQTRLGSWSHPENSRLIMTCDYCQTPWHLDCVPRASFKNLGSKWKCPLHSPT. Position 683 is a phosphoserine (S683).

Component of the RPD3C(S) complex composed of at least EAF3, RCO1, RPD3, SIN3, and UME1.

It is found in the nucleus. Catalytic component of the RPD3C(S) histone deacetylase complex responsible for the deacetylation of lysine residues on the N-terminal part of the core histones (H2A, H2B, H3 and H4). Histone deacetylation gives a tag for epigenetic repression and plays an important role in transcriptional regulation, cell cycle progression, DNA damage response, osmotic stress response and developmental events. This is Transcriptional regulatory protein RCO1 (RCO1) from Saccharomyces cerevisiae (strain ATCC 204508 / S288c) (Baker's yeast).